We begin with the raw amino-acid sequence, 452 residues long: UDP-N-acetylmuramoylalanine--D-glutamate ligase (452 aa).

Gly-119–Thr-125 contributes to the ATP binding site.

The protein belongs to the MurCDEF family.

It localises to the cytoplasm. It catalyses the reaction UDP-N-acetyl-alpha-D-muramoyl-L-alanine + D-glutamate + ATP = UDP-N-acetyl-alpha-D-muramoyl-L-alanyl-D-glutamate + ADP + phosphate + H(+). The protein operates within cell wall biogenesis; peptidoglycan biosynthesis. In terms of biological role, cell wall formation. Catalyzes the addition of glutamate to the nucleotide precursor UDP-N-acetylmuramoyl-L-alanine (UMA). The protein is UDP-N-acetylmuramoylalanine--D-glutamate ligase of Streptococcus pyogenes serotype M4 (strain MGAS10750).